The sequence spans 418 residues: Probable basic-leucine zipper transcription factor E (418 aa).

Residues 8–47 (IQQIQQLHMLLQQQQQQQQQQQQQQQQQQQQLQQQNFQLT) adopt a coiled-coil conformation. Low complexity-rich tracts occupy residues 51–71 (FQIP…NNNN) and 95–134 (INTT…NNNT). Disordered regions lie at residues 51–75 (FQIP…ETAF), 95–149 (INTT…KKQK), 165–196 (PTAA…TTNT), and 211–252 (KNQE…KNRR). Basic residues predominate over residues 169 to 179 (VKKKPPAKKSA). Positions 180 to 196 (KNAASQPTSPTLSTTNT) are enriched in low complexity. Acidic residues predominate over residues 220–239 (DNSEESDSDEEDFENGDNEN). Positions 246–309 (GDRKNRRLLK…QLMKDKVRYL (64 aa)) constitute a bZIP domain. The segment at 248-268 (RKNRRLLKNREAAQLFRQRQK) is basic motif. The leucine-zipper stretch occupies residues 274–281 (LESKASSL). The stretch at 324–362 (SVVNQDNINNLNNNLNGLQNQQNNNNNNNNNNNNNNNNN) forms a coiled coil. The interval 336-418 (NNLNGLQNQQ…DSLLFNLPPD (83 aa)) is disordered.

This sequence belongs to the bZIP family.

The protein resides in the nucleus. Functionally, probable transcriptional regulator. The polypeptide is Probable basic-leucine zipper transcription factor E (bzpE) (Dictyostelium discoideum (Social amoeba)).